A 449-amino-acid polypeptide reads, in one-letter code: Cysteine--tRNA ligase (449 aa).

Cysteine 29 contributes to the Zn(2+) binding site. The short motif at 31 to 41 (PTVYDHLHIGN) is the 'HIGH' region element. 3 residues coordinate Zn(2+): cysteine 211, histidine 236, and glutamate 240. A 'KMSKS' region motif is present at residues 269 to 273 (KMSKS). Lysine 272 contacts ATP.

This sequence belongs to the class-I aminoacyl-tRNA synthetase family. In terms of assembly, monomer. The cofactor is Zn(2+).

The protein localises to the cytoplasm. The catalysed reaction is tRNA(Cys) + L-cysteine + ATP = L-cysteinyl-tRNA(Cys) + AMP + diphosphate. This chain is Cysteine--tRNA ligase, found in Methylocella silvestris (strain DSM 15510 / CIP 108128 / LMG 27833 / NCIMB 13906 / BL2).